The sequence spans 319 residues: HPr kinase/phosphorylase (319 aa).

Catalysis depends on residues His-141 and Lys-162. 156–163 is an ATP binding site; the sequence is GNSGVGKS. Ser-163 is a Mg(2+) binding site. Residue Asp-180 is the Proton acceptor; for phosphorylation activity. Proton donor; for dephosphorylation activity of the active site. The segment at 204-213 is important for the catalytic mechanism of both phosphorylation and dephosphorylation; sequence MEIRGIGIID. Glu-205 contacts Mg(2+). The active site involves Arg-246. Residues 267-272 are important for the catalytic mechanism of dephosphorylation; that stretch reads PVKVGR.

The protein belongs to the HPrK/P family. Homohexamer. The cofactor is Mg(2+).

The catalysed reaction is [HPr protein]-L-serine + ATP = [HPr protein]-O-phospho-L-serine + ADP + H(+). It catalyses the reaction [HPr protein]-O-phospho-L-serine + phosphate + H(+) = [HPr protein]-L-serine + diphosphate. Catalyzes the ATP- as well as the pyrophosphate-dependent phosphorylation of a specific serine residue in HPr, a phosphocarrier protein of the phosphoenolpyruvate-dependent sugar phosphotransferase system (PTS). HprK/P also catalyzes the pyrophosphate-producing, inorganic phosphate-dependent dephosphorylation (phosphorolysis) of seryl-phosphorylated HPr (P-Ser-HPr). The two antagonistic activities of HprK/P are regulated by several intracellular metabolites, which change their concentration in response to the absence or presence of rapidly metabolisable carbon sources (glucose, fructose, etc.) in the growth medium. Therefore, by controlling the phosphorylation state of HPr, HPrK/P is a sensor enzyme that plays a major role in the regulation of carbon metabolism and sugar transport: it mediates carbon catabolite repression (CCR), and regulates PTS-catalyzed carbohydrate uptake and inducer exclusion. The chain is HPr kinase/phosphorylase from Lactobacillus gasseri (strain ATCC 33323 / DSM 20243 / BCRC 14619 / CIP 102991 / JCM 1131 / KCTC 3163 / NCIMB 11718 / NCTC 13722 / AM63).